A 342-amino-acid polypeptide reads, in one-letter code: C-X-C chemokine receptor type 6 (342 aa).

At 1–32 (MAEHDYHEDYGFSSFNDSSQEEHQDFLQFSKV) the chain is on the extracellular side. A glycan (N-linked (GlcNAc...) asparagine) is linked at N16. Residues 33–59 (FLPCMYLVVFVCGLVGNSLVLVISIFY) traverse the membrane as a helical segment. At 60–68 (HKLQSLTDV) the chain is on the cytoplasmic side. The chain crosses the membrane as a helical span at residues 69-89 (FLVNLPLADLVFVCTLPFWAY). At 90–103 (AGIHEWVFGQVMCK) the chain is on the extracellular side. C102 and C180 form a disulfide bridge. Residues 104 to 125 (SLLGIYTINFYTSMLILTCITV) form a helical membrane-spanning segment. Over 126 to 143 (DRFIVVVKATKAYNQQAK) the chain is Cytoplasmic. A helical membrane pass occupies residues 144-164 (RMTWGKVTSLLIWVISLLVSL). Residues 165–187 (PQIIYGNVFNLDKLICGYHDEAI) lie on the Extracellular side of the membrane. Residues 188 to 215 (STVVLATQMTLGFFLPLLTMIVCYSVII) traverse the membrane as a helical segment. Over 216 to 231 (KTLLHAGGFQKHRSLK) the chain is Cytoplasmic. The chain crosses the membrane as a helical span at residues 232–259 (IIFLVMAVFLLTQMPFNLMKFIRSTHWE). At 260–275 (YYAMTSFHYTIMVTEA) the chain is on the extracellular side. The helical transmembrane segment at 276-293 (IAYLRACLNPVLYAFVSL) threads the bilayer. At 294 to 342 (KFRKNFWKLVKDIGCLPYLGVSHQWKSSEDNSKTFSASHNVEATSMFQL) the chain is on the cytoplasmic side.

The protein belongs to the G-protein coupled receptor 1 family. Expressed in lymphoid tissues and activated T cells.

The protein localises to the cell membrane. Functionally, receptor for the C-X-C chemokine CXCL16. Used as a coreceptor by SIVs and by strains of HIV-2 and m-tropic HIV-1. The protein is C-X-C chemokine receptor type 6 (CXCR6) of Homo sapiens (Human).